We begin with the raw amino-acid sequence, 144 residues long: Large ribosomal subunit protein uL16 (144 aa).

The span at 1–19 shows a compositional bias: basic residues; that stretch reads MLLPKRVKYRRQHRPKTTG. The tract at residues 1–23 is disordered; it reads MLLPKRVKYRRQHRPKTTGRSKG.

It belongs to the universal ribosomal protein uL16 family. As to quaternary structure, part of the 50S ribosomal subunit.

In terms of biological role, binds 23S rRNA and is also seen to make contacts with the A and possibly P site tRNAs. This chain is Large ribosomal subunit protein uL16, found in Staphylococcus aureus (strain Mu50 / ATCC 700699).